We begin with the raw amino-acid sequence, 339 residues long: Serpentine receptor class delta-32 (339 aa).

Helical transmembrane passes span 14 to 34 (AAVVSTLGIIFNGFLLFLIFF), 45 to 65 (VFLANTSITQLGYCICFLLTV), 94 to 114 (IFTTMLHFAVNSFLSIMLSMV), 128 to 148 (SGAFAMCILAYMIPLSMVVSI), 188 to 208 (LWVACCVSILCIPIYSVMFWC), 237 to 257 (ALTVQSLIPVFTLFPASLIFL), and 269 to 289 (FGYIIISLLSLSPTIDPLVTI).

The protein belongs to the nematode receptor-like protein srd family.

Its subcellular location is the membrane. This is Serpentine receptor class delta-32 (srd-32) from Caenorhabditis elegans.